Consider the following 60-residue polypeptide: MATKTVKVTQTKSAIGRLPKHRATLTGLGLRRIGHTVELEDTPSIRGMINKVYYMVKVED.

This sequence belongs to the universal ribosomal protein uL30 family. In terms of assembly, part of the 50S ribosomal subunit.

In Shewanella sp. (strain MR-7), this protein is Large ribosomal subunit protein uL30.